The sequence spans 509 residues: ATP synthase subunit alpha (509 aa).

169 to 176 (GDRQTGKT) serves as a coordination point for ATP.

The protein belongs to the ATPase alpha/beta chains family. F-type ATPases have 2 components, CF(1) - the catalytic core - and CF(0) - the membrane proton channel. CF(1) has five subunits: alpha(3), beta(3), gamma(1), delta(1), epsilon(1). CF(0) has three main subunits: a(1), b(2) and c(9-12). The alpha and beta chains form an alternating ring which encloses part of the gamma chain. CF(1) is attached to CF(0) by a central stalk formed by the gamma and epsilon chains, while a peripheral stalk is formed by the delta and b chains.

The protein localises to the cell inner membrane. It catalyses the reaction ATP + H2O + 4 H(+)(in) = ADP + phosphate + 5 H(+)(out). Its function is as follows. Produces ATP from ADP in the presence of a proton gradient across the membrane. The alpha chain is a regulatory subunit. This is ATP synthase subunit alpha from Novosphingobium aromaticivorans (strain ATCC 700278 / DSM 12444 / CCUG 56034 / CIP 105152 / NBRC 16084 / F199).